Reading from the N-terminus, the 655-residue chain is SRSF protein kinase 1 (655 aa).

Positions 1 to 57 are disordered; it reads MERKVLALQARKKRTKAKKDKAQRKSETQHRGSAPHSESDLPEQEEEILGSDDDEQE. The segment covering 10–22 has biased composition (basic residues); it reads ARKKRTKAKKDKA. The span at 40 to 57 shows a compositional bias: acidic residues; that stretch reads DLPEQEEEILGSDDDEQE. Residue Ser51 is modified to Phosphoserine; by CK2. The 574-residue stretch at 80–653 folds into the Protein kinase domain; the sequence is YHVIRKLGWG…AAECLRHPWL (574 aa). Residues 86-94, Lys109, and 166-168 contribute to the ATP site; these read LGWGHFSTV and EVL. Asp213 functions as the Proton acceptor in the catalytic mechanism. Disordered stretches follow at residues 238–341 and 397–417; these read WQRS…QDQT and FLSSQNGDSSTSQETDSCTPI. The segment covering 265–276 has biased composition (basic residues); it reads KNKKKKLKKKQK. Basic and acidic residues-rich tracts occupy residues 277–288 and 304–318; these read RQAELLEKRMQE and NKQEESESPVERPLK. Phosphoserine occurs at positions 309, 311, and 333. Ser555 bears the Phosphoserine; by CK2 mark.

This sequence belongs to the protein kinase superfamily. CMGC Ser/Thr protein kinase family. In terms of assembly, monomer. Isoform 2 is found in a multisubunit complex containing seven proteins, named toposome, which separates entangled circular chromatin DNA during chromosome segregation. Isoform 2 interacts with DNAJC8 and AHSA1/AHA1 and this mediates formation of a complex with the Hsp70 /Hsp90 machinery. Isoform 1 is found in a complex with: DHX9, MOV10, MATR3, HNRNPU, NCL, DDX21, HSD17B4, PABPC1, HNRNPM, IGF2BP1, SYNCRIP, RPL3, VIM, YBX1, NPM1, HNRNPA2B1, HNRNPC, RPLP0, RPL7A and RALY. Isoform 2 binds to IGF2BP1, SYNCRIP, HNRNPA2B1 and HNRNPC. Isoform 1 and isoform 2 interact with SAFB which inhibits its activity. Isoform 2 interacts with SAFB2 which inhibits its activity. (Microbial infection) Isoform 2 interacts with HHV-1 ICP27 protein. Mg(2+) is required as a cofactor. As to expression, isoform 2 is predominantly expressed in the testis but is also present at lower levels in heart, ovary, small intestine, liver, kidney, pancreas and skeletal muscle. Isoform 1 is only seen in the testis, at lower levels than isoform 2. Highly expressed in different erythroid and lymphoid cell lines, with isoform 2 being far more abundant than isoform 1.

The protein resides in the cytoplasm. It is found in the nucleus. It localises to the nucleus matrix. The protein localises to the microsome. Its subcellular location is the nucleoplasm. The protein resides in the nucleus speckle. It is found in the chromosome. It catalyses the reaction L-seryl-[protein] + ATP = O-phospho-L-seryl-[protein] + ADP + H(+). It carries out the reaction L-threonyl-[protein] + ATP = O-phospho-L-threonyl-[protein] + ADP + H(+). With respect to regulation, activated by phosphorylation on Ser-51 and Ser-555. Its function is as follows. Serine/arginine-rich protein-specific kinase which specifically phosphorylates its substrates at serine residues located in regions rich in arginine/serine dipeptides, known as RS domains and is involved in the phosphorylation of SR splicing factors and the regulation of splicing. Plays a central role in the regulatory network for splicing, controlling the intranuclear distribution of splicing factors in interphase cells and the reorganization of nuclear speckles during mitosis. Can influence additional steps of mRNA maturation, as well as other cellular activities, such as chromatin reorganization in somatic and sperm cells and cell cycle progression. Isoform 2 phosphorylates SFRS2, ZRSR2, LBR and PRM1. Isoform 2 phosphorylates SRSF1 using a directional (C-terminal to N-terminal) and a dual-track mechanism incorporating both processive phosphorylation (in which the kinase stays attached to the substrate after each round of phosphorylation) and distributive phosphorylation steps (in which the kinase and substrate dissociate after each phosphorylation event). The RS domain of SRSF1 binds first to a docking groove in the large lobe of the kinase domain of SRPK1. This induces certain structural changes in SRPK1 and/or RRM2 domain of SRSF1, allowing RRM2 to bind the kinase and initiate phosphorylation. The cycles continue for several phosphorylation steps in a processive manner (steps 1-8) until the last few phosphorylation steps (approximately steps 9-12). During that time, a mechanical stress induces the unfolding of the beta-4 motif in RRM2, which then docks at the docking groove of SRPK1. This also signals RRM2 to begin to dissociate, which facilitates SRSF1 dissociation after phosphorylation is completed. Isoform 2 can mediate hepatitis B virus (HBV) core protein phosphorylation. It plays a negative role in the regulation of HBV replication through a mechanism not involving the phosphorylation of the core protein but by reducing the packaging efficiency of the pregenomic RNA (pgRNA) without affecting the formation of the viral core particles. Isoform 1 and isoform 2 can induce splicing of exon 10 in MAPT/TAU. The ratio of isoform 1/isoform 2 plays a decisive role in determining cell fate in K-562 leukaemic cell line: isoform 2 favors proliferation where as isoform 1 favors differentiation. The protein is SRSF protein kinase 1 of Homo sapiens (Human).